The following is a 444-amino-acid chain: sn-glycerol-3-phosphate-binding periplasmic protein UgpB (444 aa).

The N-terminal stretch at 1-30 (MFNNTIRKTHAIRTAAACVAFALMSAGAQA) is a signal peptide. Tyr72, Glu96, Ser151, Ser277, Gly314, Tyr353, and Arg404 together coordinate sn-glycerol 3-phosphate.

It belongs to the bacterial solute-binding protein 1 family. As to quaternary structure, the complex is composed of two ATP-binding proteins (UgpC), two transmembrane proteins (UgpA and UgpE) and a solute-binding protein (UgpB).

It localises to the periplasm. Its function is as follows. Part of the ABC transporter complex UgpBAEC involved in sn-glycerol-3-phosphate (G3P) import. Binds G3P. This is sn-glycerol-3-phosphate-binding periplasmic protein UgpB (ugpB) from Pectobacterium atrosepticum (strain SCRI 1043 / ATCC BAA-672) (Erwinia carotovora subsp. atroseptica).